We begin with the raw amino-acid sequence, 342 residues long: MDNERVITAVAVGSQEEQQDRAIRPASLADYHGQPKVSERMEIFIDAARGRNEALDHTLIFGPPGLGKTTLAHIIAREMGCDLKSTSGPVLEKAGDLAAILTNLEEGDVLFVDEIHRLSPVVEEILYPAMEDYQLDIMIGEGPAARSIKLDLPPFTLVGATTRAGLLTAPLRDRFGIVQRLEFYSVDDLSGIVSRACDILAIPIEAAGAMEVARRARGTPRIANRLLRRVRDYAEVKGDGRITEEIAQRALDMLEVDSCGLDGTDRRLLDMIMHKFDGGPVGLESLAAALNEDSGTLEEVVEPYLIQQGFIQRTPRGRAVTNHAWRHFGLQRPRQDGDLFND.

The interval 1–184 is large ATPase domain (RuvB-L); the sequence is MDNERVITAV…FGIVQRLEFY (184 aa). Residues isoleucine 23, arginine 24, glycine 65, lysine 68, threonine 69, threonine 70, 131–133, arginine 174, tyrosine 184, and arginine 221 each bind ATP; that span reads EDY. Threonine 69 provides a ligand contact to Mg(2+). The segment at 185 to 255 is small ATPAse domain (RuvB-S); sequence SVDDLSGIVS…IAQRALDMLE (71 aa). The segment at 258–342 is head domain (RuvB-H); the sequence is SCGLDGTDRR…PRQDGDLFND (85 aa). Arginine 313 and arginine 318 together coordinate DNA.

It belongs to the RuvB family. In terms of assembly, homohexamer. Forms an RuvA(8)-RuvB(12)-Holliday junction (HJ) complex. HJ DNA is sandwiched between 2 RuvA tetramers; dsDNA enters through RuvA and exits via RuvB. An RuvB hexamer assembles on each DNA strand where it exits the tetramer. Each RuvB hexamer is contacted by two RuvA subunits (via domain III) on 2 adjacent RuvB subunits; this complex drives branch migration. In the full resolvosome a probable DNA-RuvA(4)-RuvB(12)-RuvC(2) complex forms which resolves the HJ.

The protein localises to the cytoplasm. It carries out the reaction ATP + H2O = ADP + phosphate + H(+). The RuvA-RuvB-RuvC complex processes Holliday junction (HJ) DNA during genetic recombination and DNA repair, while the RuvA-RuvB complex plays an important role in the rescue of blocked DNA replication forks via replication fork reversal (RFR). RuvA specifically binds to HJ cruciform DNA, conferring on it an open structure. The RuvB hexamer acts as an ATP-dependent pump, pulling dsDNA into and through the RuvAB complex. RuvB forms 2 homohexamers on either side of HJ DNA bound by 1 or 2 RuvA tetramers; 4 subunits per hexamer contact DNA at a time. Coordinated motions by a converter formed by DNA-disengaged RuvB subunits stimulates ATP hydrolysis and nucleotide exchange. Immobilization of the converter enables RuvB to convert the ATP-contained energy into a lever motion, pulling 2 nucleotides of DNA out of the RuvA tetramer per ATP hydrolyzed, thus driving DNA branch migration. The RuvB motors rotate together with the DNA substrate, which together with the progressing nucleotide cycle form the mechanistic basis for DNA recombination by continuous HJ branch migration. Branch migration allows RuvC to scan DNA until it finds its consensus sequence, where it cleaves and resolves cruciform DNA. This chain is Holliday junction branch migration complex subunit RuvB, found in Alcanivorax borkumensis (strain ATCC 700651 / DSM 11573 / NCIMB 13689 / SK2).